Consider the following 232-residue polypeptide: Histone H1.X (232 aa).

Positions His36 to Lys112 constitute an H15 domain. The disordered stretch occupies residues Ile142 to Cys232. A compositionally biased stretch (basic residues) spans Lys159 to Pro197.

Belongs to the histone H1/H5 family.

The protein localises to the nucleus. It is found in the chromosome. The protein is Histone H1.X (hil-1) of Caenorhabditis elegans.